Here is a 115-residue protein sequence, read N- to C-terminus: Photosystem II reaction center Psb28 protein (115 aa).

Belongs to the Psb28 family. As to quaternary structure, part of the photosystem II complex.

The protein localises to the plastid. It localises to the chloroplast thylakoid membrane. The sequence is that of Photosystem II reaction center Psb28 protein from Phaeodactylum tricornutum (strain CCAP 1055/1).